The chain runs to 131 residues: Heterochromatin silencing protein rss1 (131 aa).

In terms of assembly, monomer.

The protein localises to the cytoplasm. It localises to the nucleus. In terms of biological role, required for heterochromatin silencing within pericentromeric repeats and at telomers. Facilitates the recruitment of Clr6 histone deacetylase (HDAC) by interacting with histones. Also interacts with Rad25, which mediates heterochromatin silencing in DNA repeats by recruiting the RITS complex. Together with Rad25, forms a regulatory hub that defines heterochromatin silencing within tandem repeats via linking RNAi and HDAC. The chain is Heterochromatin silencing protein rss1 (rss1) from Schizosaccharomyces pombe (strain 972 / ATCC 24843) (Fission yeast).